The chain runs to 99 residues: DNA-binding protein HmvA (99 aa).

The interaction with DNA stretch occupies residues 52-55; sequence KTIK.

It belongs to the archaeal histone HMF family. In terms of assembly, homodimer or heterodimer with another histone. Dimers then assemble into higher oligomers, with the DNA wrapped around the protein core.

The protein resides in the cytoplasm. It localises to the chromosome. Functionally, binds and compact DNA (95 to 150 base pairs) to form nucleosome-like structures that contain positive DNA supercoils. Increases the resistance of DNA to thermal denaturation (in vitro). The sequence is that of DNA-binding protein HmvA (hmvA) from Methanococcus voltae.